A 98-amino-acid chain; its full sequence is NADH-ubiquinone oxidoreductase chain 4L (98 aa).

3 consecutive transmembrane segments (helical) span residues 1–21 (MMPI…GTLI), 28–48 (STLL…AMLI), and 59–79 (APLI…ALLV).

The protein belongs to the complex I subunit 4L family. In terms of assembly, core subunit of respiratory chain NADH dehydrogenase (Complex I) which is composed of 45 different subunits.

The protein resides in the mitochondrion inner membrane. It carries out the reaction a ubiquinone + NADH + 5 H(+)(in) = a ubiquinol + NAD(+) + 4 H(+)(out). Its function is as follows. Core subunit of the mitochondrial membrane respiratory chain NADH dehydrogenase (Complex I) which catalyzes electron transfer from NADH through the respiratory chain, using ubiquinone as an electron acceptor. Part of the enzyme membrane arm which is embedded in the lipid bilayer and involved in proton translocation. The sequence is that of NADH-ubiquinone oxidoreductase chain 4L (MT-ND4L) from Petaurus breviceps (Australian sugar glider).